Reading from the N-terminus, the 577-residue chain is MNIQALLSEKVRQAMIAAGAPADCEPQVRQSAKVQFGDYQANGMMAVAKKLGMAPRQLAEQVLTHLDLNGIASKVEIAGPGFINIFLDPAFLAEHVQQALASDRLGVATPEKQTIVVDYSAPNVAKEMHVGHLRSTIIGDAAVRTLEFLGHKVIRANHVGDWGTQFGMLIAWLEKQQQENAGEMELADLEGFYRDAKKHYDEDEEFAERARNYVVKLQSGDEYFHEMWRKLVDITMTQNQITYDRLNVTLTRDDVMGESLYNPMLPGIVADLKAKGLAVESEGATVVFLDEFKNKEGEPMGVIIQKKDGGYLYTTTDIACAKYRYETLHADRVLYYIDSRQHQHLMQAWAIVRKAGYVPESVPLEHHMFGMMLGKDGKPFKTRAGGTVKLADLLDEALERARRLVAEKNPDMPADELEKLANAVGIGAVKYADLSKNRTTDYIFDWDNMLAFEGNTAPYMQYAYTRVLSVFRKAEINEEQLAAAPVIIREDREAQLAARLLQFEETLTVVAREGTPHVMCAYLYDLAGLFSGFYEHCPILSAENEEVRNSRLKLAQLTAKTLKLGLDTLGIETVERM.

Residues 122-132 carry the 'HIGH' region motif; it reads PNVAKEMHVGH.

The protein belongs to the class-I aminoacyl-tRNA synthetase family. Monomer.

It localises to the cytoplasm. The catalysed reaction is tRNA(Arg) + L-arginine + ATP = L-arginyl-tRNA(Arg) + AMP + diphosphate. In Escherichia coli O81 (strain ED1a), this protein is Arginine--tRNA ligase.